Consider the following 331-residue polypeptide: Biotin synthase (331 aa).

One can recognise a Radical SAM core domain in the interval 52–277 (PDVEVEGIIS…RTMLRFAGGR (226 aa)). [4Fe-4S] cluster contacts are provided by Cys-67, Cys-71, and Cys-74. [2Fe-2S] cluster-binding residues include Cys-110, Cys-143, Cys-202, and Arg-272.

The protein belongs to the radical SAM superfamily. Biotin synthase family. In terms of assembly, homodimer. [4Fe-4S] cluster is required as a cofactor. The cofactor is [2Fe-2S] cluster.

It catalyses the reaction (4R,5S)-dethiobiotin + (sulfur carrier)-SH + 2 reduced [2Fe-2S]-[ferredoxin] + 2 S-adenosyl-L-methionine = (sulfur carrier)-H + biotin + 2 5'-deoxyadenosine + 2 L-methionine + 2 oxidized [2Fe-2S]-[ferredoxin]. It functions in the pathway cofactor biosynthesis; biotin biosynthesis; biotin from 7,8-diaminononanoate: step 2/2. Functionally, catalyzes the conversion of dethiobiotin (DTB) to biotin by the insertion of a sulfur atom into dethiobiotin via a radical-based mechanism. This chain is Biotin synthase, found in Mycolicibacterium gilvum (strain PYR-GCK) (Mycobacterium gilvum (strain PYR-GCK)).